We begin with the raw amino-acid sequence, 727 residues long: Telomere repeats-binding bouquet formation protein 1 (727 aa).

ARM repeat units follow at residues 101 to 144 (ELFE…RETG) and 339 to 382 (NGLP…GEYP). Residues 398–446 (ENNLEEHWRKAKEILHRIEQLEREGNEEEIQRENYQDNISSMNISIQNT) adopt a coiled-coil conformation. The span at 457–468 (RGSKAEDEDKSH) shows a compositional bias: basic and acidic residues. Residues 457 to 493 (RGSKAEDEDKSHSRQLQSYKSHGVMSKACTNDDQMKT) are disordered. Positions 523 to 662 (QNLHEETTFE…QRLSNESTTP (140 aa)) are interaction with TERF1. Thr-648 is modified (phosphothreonine). The 54-residue stretch at 666-719 (KKRRIRKNFTEEEVNYLFNGVKKMGNHWNSILWSFPFQQGRKAVDLAHKYHKLT) folds into the Myb-like domain.

The protein belongs to the TERB1 family. In terms of assembly, component of the MAJIN-TERB1-TERB2 complex, composed of MAJIN, TERB1 and TERB2. Interacts with TERF1, STAG3 and SUN1. Interacts (via Myb-like domain) with the cohesin complex; probably mediated via interaction with STAG3. Phosphorylated by CDK. Phosphorylation by CDK takes place in late prophase when the cap exchange is prominent. is important for the stabilization of telomere attachment but dispenable for the cap exchange.

Its subcellular location is the chromosome. It localises to the telomere. The protein localises to the nucleus inner membrane. Its function is as follows. Meiosis-specific telomere-associated protein involved in meiotic telomere attachment to the nucleus inner membrane, a crucial step for homologous pairing and synapsis. Component of the MAJIN-TERB1-TERB2 complex, which promotes telomere cap exchange by mediating attachment of telomeric DNA to the inner nuclear membrane and replacement of the protective cap of telomeric chromosomes: in early meiosis, the MAJIN-TERB1-TERB2 complex associates with telomeric DNA and the shelterin/telosome complex. During prophase, the complex matures and promotes release of the shelterin/telosome complex from telomeric DNA. In the MAJIN-TERB1-TERB2 complex, TERB1 probably mediates association with the shelterin/telosome complex via interaction with TERF1, promoting priming telomeric DNA attachment'. Promotes telomere association with the nuclear envelope and deposition of the SUN-KASH/LINC complex. Also recruits cohesin to telomeres to develop structural rigidity. The chain is Telomere repeats-binding bouquet formation protein 1 from Homo sapiens (Human).